A 527-amino-acid chain; its full sequence is Nucleobase-ascorbate transporter LPE1 (527 aa).

The next 12 helical transmembrane spans lie at 43–63 (LVML…MGGG), 68–88 (AIVI…QVHF), 92–112 (LPAV…IILS), 132–152 (LQGA…FGIW), 163–183 (AAVP…FPGV), 189–209 (VGLP…HLFA), 219–239 (AVLV…AAGA), 284–304 (FAML…LIAV), 361–383 (VIKI…AVLA), 387–409 (LPIF…FSLL), 427–447 (LFLG…FGFG), and 458–478 (VMVN…AYLL).

The protein belongs to the nucleobase:cation symporter-2 (NCS2) (TC 2.A.40) family. In terms of tissue distribution, highly expressed in roots.

The protein localises to the membrane. With respect to regulation, inhibited by excess of xanthin, uric acid and ascorbic acid, and by 100 um N,N-dicyclohexylcarbodiimide and 30 um carbonyl cyanide m-chlorophenyl-hydrazone. Its function is as follows. High affinity uric acid-xanthine transporter in A.nidulans. Binds, but cannot transport ascorbic acid. This Zea mays (Maize) protein is Nucleobase-ascorbate transporter LPE1 (LPE1).